A 278-amino-acid chain; its full sequence is HTH-type transcriptional activator RhaS (278 aa).

Residues 174–272 (NLLLAWLEDH…NWSPRDIRQG (99 aa)) enclose the HTH araC/xylS-type domain. DNA-binding regions (H-T-H motif) lie at residues 191-212 (DAVA…KQQT) and 239-262 (VTDI…RREF).

In terms of assembly, binds DNA as a dimer.

The protein localises to the cytoplasm. Its function is as follows. Activates expression of the rhaBAD and rhaT operons. The polypeptide is HTH-type transcriptional activator RhaS (Shigella boydii serotype 4 (strain Sb227)).